Reading from the N-terminus, the 180-residue chain is Large ribosomal subunit protein uL5 (180 aa).

It belongs to the universal ribosomal protein uL5 family. As to quaternary structure, part of the 50S ribosomal subunit; part of the 5S rRNA/L5/L18/L25 subcomplex. Contacts the 5S rRNA and the P site tRNA. Forms a bridge to the 30S subunit in the 70S ribosome.

Its function is as follows. This is one of the proteins that bind and probably mediate the attachment of the 5S RNA into the large ribosomal subunit, where it forms part of the central protuberance. In the 70S ribosome it contacts protein S13 of the 30S subunit (bridge B1b), connecting the 2 subunits; this bridge is implicated in subunit movement. Contacts the P site tRNA; the 5S rRNA and some of its associated proteins might help stabilize positioning of ribosome-bound tRNAs. This chain is Large ribosomal subunit protein uL5, found in Roseiflexus castenholzii (strain DSM 13941 / HLO8).